The sequence spans 158 residues: Large ribosomal subunit protein uL16 (158 aa).

This sequence belongs to the universal ribosomal protein uL16 family. Part of the 50S ribosomal subunit.

Binds 23S rRNA and is also seen to make contacts with the A and possibly P site tRNAs. This Prochlorococcus marinus (strain MIT 9313) protein is Large ribosomal subunit protein uL16.